The primary structure comprises 637 residues: MSNSQANAGISGSTVADEPIQHHPSLAAGPVSASCPAATPPSQSTQQPPPHIVSASTADAGSSAAVGVGVVAGSEGVNLDSSPRESGDDSEDESEILEESPCGRWLKRREEVDQRDVPGIDCVHLAMDTEEGVEVVWNEVQYASLQELKSQEEKMRQVFDNLLQLDHQNIVKFHRYWTDTQQAERPRVVFITEYMSSGSLKQFLKRTKRNAKRLPLESWRRWCTQILSALSYLHSCSPPIIHGNLTCDSIFIQHNGLVKIGSVVPDAVHYSVRRGRERERERERGAHYFQAPEYGAADQLTAALDIYAFGMCALEMAALEIQPSNSESTAINEETIQRTIFSLENDLQRDLIRKCLNPQPQDRPSANDLLFHPLLFEVHSLKLLTAHCLVFSPANRTMFSETAFDGLMQRYYQPDVVMAQLRLAGGQERQYRLADVSGADKLEKFVEDVKYGVYPLITYSGKKPPNFRSRAASPERADSVKSATPEPVDTESRRIVNMMCSVKIKEDSNDITMTILLRMDDKMNRQLTCQVNENDTAADLTSELVRLGFVHLDDQDKIQVLLEETLKAGVMSDGAGAESSGAGVTTTATMAALEQLERNWSISSDADKQGTAVMYVPQEQQNADGDVDVEHSGTTSN.

Residues 1–14 (MSNSQANAGISGST) show a composition bias toward polar residues. Disordered stretches follow at residues 1-60 (MSNS…TADA) and 74-99 (SEGVNLDSSPRESGDDSEDESEILEE). Positions 36-46 (PAATPPSQSTQ) are enriched in low complexity. Residues 88–98 (DDSEDESEILE) show a composition bias toward acidic residues. Residues 109–375 (REEVDQRDVP…ANDLLFHPLL (267 aa)) form the Protein kinase domain. Disordered stretches follow at residues 465–489 (PNFRSRAASPERADSVKSATPEPVD) and 617–637 (PQEQQNADGDVDVEHSGTTSN). Residues serine 473, serine 479, and serine 482 each carry the phosphoserine modification. Threonine 484 is subject to Phosphothreonine.

The protein belongs to the protein kinase superfamily. Ser/Thr protein kinase family.

It is found in the cytoplasm. The protein resides in the cell cortex. In terms of biological role, may play a role in subcellular trafficking between the endoplasmic reticulum and Golgi apparatus. The protein is Nuclear receptor-binding protein homolog of Drosophila melanogaster (Fruit fly).